The primary structure comprises 284 residues: 1D-myo-inositol 2-acetamido-2-deoxy-alpha-D-glucopyranoside deacetylase (284 aa).

Histidine 12, aspartate 15, and histidine 146 together coordinate Zn(2+).

This sequence belongs to the MshB deacetylase family. Zn(2+) is required as a cofactor.

The enzyme catalyses 1D-myo-inositol 2-acetamido-2-deoxy-alpha-D-glucopyranoside + H2O = 1D-myo-inositol 2-amino-2-deoxy-alpha-D-glucopyranoside + acetate. Functionally, catalyzes the deacetylation of 1D-myo-inositol 2-acetamido-2-deoxy-alpha-D-glucopyranoside (GlcNAc-Ins) in the mycothiol biosynthesis pathway. This chain is 1D-myo-inositol 2-acetamido-2-deoxy-alpha-D-glucopyranoside deacetylase, found in Mycolicibacterium vanbaalenii (strain DSM 7251 / JCM 13017 / BCRC 16820 / KCTC 9966 / NRRL B-24157 / PYR-1) (Mycobacterium vanbaalenii).